Reading from the N-terminus, the 498-residue chain is ATP synthase subunit beta, chloroplastic (498 aa).

172 to 179 (GGAGVGKT) lines the ATP pocket.

This sequence belongs to the ATPase alpha/beta chains family. In terms of assembly, F-type ATPases have 2 components, CF(1) - the catalytic core - and CF(0) - the membrane proton channel. CF(1) has five subunits: alpha(3), beta(3), gamma(1), delta(1), epsilon(1). CF(0) has four main subunits: a(1), b(1), b'(1) and c(9-12).

It localises to the plastid. Its subcellular location is the chloroplast thylakoid membrane. It carries out the reaction ATP + H2O + 4 H(+)(in) = ADP + phosphate + 5 H(+)(out). Functionally, produces ATP from ADP in the presence of a proton gradient across the membrane. The catalytic sites are hosted primarily by the beta subunits. This Agrostis stolonifera (Creeping bentgrass) protein is ATP synthase subunit beta, chloroplastic.